The chain runs to 171 residues: Thioredoxin-2 (171 aa).

A Thioredoxin domain is found at 41–169 (AFNASPSTSQ…LQALISANHP (129 aa)). An intrachain disulfide couples Cys95 to Cys98.

Belongs to the thioredoxin family.

The protein localises to the cytoplasm. It is found in the vacuole. Its function is as follows. Thioredoxin involved in responses to oxidative and cell wall stresses. Plays an important role in appressorium formation on hyphal tips. TRX2 may affect invasive growth via the MST11-MST7-PMK1 pathway since it is required for the proper folding or dimerization of MAPKK MST7. This is Thioredoxin-2 from Pyricularia oryzae (strain 70-15 / ATCC MYA-4617 / FGSC 8958) (Rice blast fungus).